The following is a 287-amino-acid chain: ATP synthase gamma chain (287 aa).

This sequence belongs to the ATPase gamma chain family. As to quaternary structure, F-type ATPases have 2 components, CF(1) - the catalytic core - and CF(0) - the membrane proton channel. CF(1) has five subunits: alpha(3), beta(3), gamma(1), delta(1), epsilon(1). CF(0) has three main subunits: a, b and c.

Its subcellular location is the cell inner membrane. Its function is as follows. Produces ATP from ADP in the presence of a proton gradient across the membrane. The gamma chain is believed to be important in regulating ATPase activity and the flow of protons through the CF(0) complex. This is ATP synthase gamma chain from Xanthomonas oryzae pv. oryzae (strain MAFF 311018).